The chain runs to 124 residues: Cytochrome b5-like protein (124 aa).

A helical transmembrane segment spans residues 5 to 22 (YLLILIIIYVIKIICRYF). Residues 49 to 124 (NQINQVNQVN…ILSKYKITEK (76 aa)) form the Cytochrome b5 heme-binding domain. Heme-binding residues include His-84 and His-108.

This sequence belongs to the cytochrome b5 family.

It is found in the membrane. Membrane bound hemoprotein which function as an electron carrier for several membrane bound oxygenases. The protein is Cytochrome b5-like protein of Acanthamoeba polyphaga (Amoeba).